We begin with the raw amino-acid sequence, 395 residues long: Protein PELOTA 2 (395 aa).

It belongs to the eukaryotic release factor 1 family. Pelota subfamily. Requires a divalent metal cation as cofactor.

It localises to the cytoplasm. It is found in the nucleus. Functionally, component of the Pelota-HBS1L complex, a complex that recognizes stalled ribosomes and triggers the No-Go Decay (NGD) pathway. In the Pelota-HBS1L complex, pelo recognizes ribosomes stalled at the 3' end of an mRNA and engages stalled ribosomes by destabilizing mRNA in the mRNA channel. Following ribosome-binding, the Pelota-HBS1L complex promotes the disassembly of stalled ribosomes, followed by degradation of damaged mRNAs as part of the NGD pathway. The polypeptide is Protein PELOTA 2 (PEL2) (Arabidopsis thaliana (Mouse-ear cress)).